The primary structure comprises 156 residues: Cyanate hydratase (156 aa).

Catalysis depends on residues arginine 96, glutamate 99, and serine 122.

Belongs to the cyanase family. Homodecamer composed of five homodimers.

The enzyme catalyses cyanate + hydrogencarbonate + 3 H(+) = NH4(+) + 2 CO2. In terms of biological role, catalyzes the reaction of cyanate with bicarbonate to produce ammonia and carbon dioxide. The chain is Cyanate hydratase (cynS) from Escherichia coli O157:H7.